The following is a 310-amino-acid chain: Coproporphyrin III ferrochelatase (310 aa).

Residues Tyr13, Arg30, 46 to 47 (RY), Ser54, and Tyr125 each bind Fe-coproporphyrin III. Residues His183 and Glu264 each contribute to the Fe(2+) site.

The protein belongs to the ferrochelatase family.

The protein localises to the cytoplasm. The enzyme catalyses Fe-coproporphyrin III + 2 H(+) = coproporphyrin III + Fe(2+). The protein operates within porphyrin-containing compound metabolism; protoheme biosynthesis. Involved in coproporphyrin-dependent heme b biosynthesis. Catalyzes the insertion of ferrous iron into coproporphyrin III to form Fe-coproporphyrin III. The sequence is that of Coproporphyrin III ferrochelatase from Geobacillus sp. (strain WCH70).